The chain runs to 292 residues: Inositol monophosphatase 2 (292 aa).

Mg(2+) contacts are provided by Glu75, Asp94, Ile96, Asp97, and Asp231. Position 75 (Glu75) interacts with substrate. Substrate contacts are provided by residues 96-99 (IDGT) and Asp231.

This sequence belongs to the inositol monophosphatase superfamily. The cofactor is Mg(2+).

The enzyme catalyses a myo-inositol phosphate + H2O = myo-inositol + phosphate. Its pathway is polyol metabolism; myo-inositol biosynthesis; myo-inositol from D-glucose 6-phosphate: step 2/2. With respect to regulation, inhibited by Li(+) and Na(+). Its function is as follows. Responsible for the provision of inositol required for synthesis of phosphatidylinositol and polyphosphoinositides and involved in the inositol cycle of calcium signaling. This Saccharomyces cerevisiae (strain ATCC 204508 / S288c) (Baker's yeast) protein is Inositol monophosphatase 2 (INM2).